Reading from the N-terminus, the 193-residue chain is Guanylate kinase (193 aa).

The Guanylate kinase-like domain occupies 12 to 191 (DLLTIVAGPT…AANELWLAMN (180 aa)). An ATP-binding site is contributed by 19 to 26 (GPTAVGKG).

The protein belongs to the guanylate kinase family.

The protein resides in the cytoplasm. The catalysed reaction is GMP + ATP = GDP + ADP. Its function is as follows. Essential for recycling GMP and indirectly, cGMP. The polypeptide is Guanylate kinase (Tropheryma whipplei (strain TW08/27) (Whipple's bacillus)).